The chain runs to 337 residues: Nucleoid-associated protein PBPRA2585 (337 aa).

This sequence belongs to the YejK family.

It localises to the cytoplasm. The protein resides in the nucleoid. The chain is Nucleoid-associated protein PBPRA2585 from Photobacterium profundum (strain SS9).